A 222-amino-acid polypeptide reads, in one-letter code: Ribosomal RNA small subunit methyltransferase I (222 aa).

The protein belongs to the methyltransferase superfamily. RsmI family.

It localises to the cytoplasm. The catalysed reaction is cytidine(1402) in 16S rRNA + S-adenosyl-L-methionine = 2'-O-methylcytidine(1402) in 16S rRNA + S-adenosyl-L-homocysteine + H(+). In terms of biological role, catalyzes the 2'-O-methylation of the ribose of cytidine 1402 (C1402) in 16S rRNA. The sequence is that of Ribosomal RNA small subunit methyltransferase I from Thermotoga maritima (strain ATCC 43589 / DSM 3109 / JCM 10099 / NBRC 100826 / MSB8).